The chain runs to 112 residues: Protein preY, mitochondrial (112 aa).

Residues 1 to 34 (MLTTTCRRLSQALQRPHALSAVAQRCLRAPGARS) constitute a mitochondrion transit peptide. The TRM112 domain maps to 49 to 95 (HPALLQFLVCPLSKKPLRYDASTNELINDELGIAYPIIDGVPNMIPQ).

It belongs to the PREY family. In terms of assembly, interacts (via TRM112 domain) with NDUFAF5; the interaction is direct and stabilizes NDUFAF5 protein. Interacts with COQ5; the interaction is direct, stabilizes COQ5 protein and associates PYURF with COQ enzyme complex.

Its subcellular location is the mitochondrion. Its function is as follows. In mitochondria, S-adenosylmethionine-dependent methyltransferase chaperone that supports both coenzyme Q biosynthesis, by stabilizing its components, such as COQ5, and NADH:ubiquinone oxidoreductase complex (complex I, MT-ND1) assembly, by stabilizing complex I assembly factors, such as NDUFAF5. The polypeptide is Protein preY, mitochondrial (Pyurf) (Rattus norvegicus (Rat)).